The following is a 1488-amino-acid chain: Indigoidine synthase (1488 aa).

The segment at Lys229–Leu585 is adenylation. One can recognise a Carrier domain in the interval Ala1137–Arg1212. Ser1172 carries the post-translational modification O-(pantetheine 4'-phosphoryl)serine. Residues Pro1230–Ala1346 form a thioesterase region.

Belongs to the ATP-dependent AMP-binding enzyme family. Pantetheine 4'-phosphate serves as cofactor.

The catalysed reaction is 2 FMN + 2 L-glutamine + 2 ATP + O2 = indigoidine + 2 FMNH2 + 2 AMP + 2 diphosphate + 2 H2O. It catalyses the reaction FMN + L-glutamine + ATP = 3-amino-1,5-dihydropyridine-2,6-dione + FMNH2 + AMP + diphosphate. It carries out the reaction 2 3-amino-1,5-dihydropyridine-2,6-dione + O2 = indigoidine + 2 H2O. It functions in the pathway pigment biosynthesis. In terms of biological role, nonribosomal peptide synthetase involved in the biosynthesis of the blue pigment indigoidine, which is implicated in pathogenicity and protection from oxidative stress. Catalyzes the synthesis of the blue pigment using L-Gln as a substrate. Two glutamine molecules are cyclized and oxidized to form indigoidine. This chain is Indigoidine synthase, found in Dickeya dadantii (strain 3937) (Erwinia chrysanthemi (strain 3937)).